A 179-amino-acid chain; its full sequence is Large ribosomal subunit protein uL16m (179 aa).

This sequence belongs to the universal ribosomal protein uL16 family. Component of the mitochondrial ribosome large subunit.

Its subcellular location is the mitochondrion. The chain is Large ribosomal subunit protein uL16m (RPL16) from Arabidopsis thaliana (Mouse-ear cress).